Here is a 78-residue protein sequence, read N- to C-terminus: Large ribosomal subunit protein eL20 (78 aa).

The protein belongs to the eukaryotic ribosomal protein eL20 family. As to quaternary structure, part of the 50S ribosomal subunit. Binds 23S rRNA.

The chain is Large ribosomal subunit protein eL20 from Pyrobaculum aerophilum (strain ATCC 51768 / DSM 7523 / JCM 9630 / CIP 104966 / NBRC 100827 / IM2).